Reading from the N-terminus, the 352-residue chain is Chorismate synthase (352 aa).

NADP(+) contacts are provided by arginine 48 and arginine 54. FMN is bound by residues 125–127 (RSS), 238–239 (NA), glycine 278, 293–297 (KPTSS), and arginine 319.

Belongs to the chorismate synthase family. In terms of assembly, homotetramer. It depends on FMNH2 as a cofactor.

It carries out the reaction 5-O-(1-carboxyvinyl)-3-phosphoshikimate = chorismate + phosphate. Its pathway is metabolic intermediate biosynthesis; chorismate biosynthesis; chorismate from D-erythrose 4-phosphate and phosphoenolpyruvate: step 7/7. Functionally, catalyzes the anti-1,4-elimination of the C-3 phosphate and the C-6 proR hydrogen from 5-enolpyruvylshikimate-3-phosphate (EPSP) to yield chorismate, which is the branch point compound that serves as the starting substrate for the three terminal pathways of aromatic amino acid biosynthesis. This reaction introduces a second double bond into the aromatic ring system. This chain is Chorismate synthase, found in Bordetella avium (strain 197N).